The primary structure comprises 258 residues: 5'-nucleotidase SurE (258 aa).

Positions 9, 10, 40, and 95 each coordinate a divalent metal cation.

It belongs to the SurE nucleotidase family. Requires a divalent metal cation as cofactor.

Its subcellular location is the cytoplasm. It catalyses the reaction a ribonucleoside 5'-phosphate + H2O = a ribonucleoside + phosphate. Functionally, nucleotidase that shows phosphatase activity on nucleoside 5'-monophosphates. In Nitratiruptor sp. (strain SB155-2), this protein is 5'-nucleotidase SurE.